The primary structure comprises 299 residues: RING-H2 finger protein ATL20 (299 aa).

A helical transmembrane segment spans residues 172 to 192 (LIITLCIIGGITATCIAAIRI). The RING-type; atypical zinc finger occupies 253-295 (CPICLSEYASKETVRCMPECDHCFHVQCIDEWLKIHSSCPVCR).

This sequence belongs to the RING-type zinc finger family. ATL subfamily.

It localises to the membrane. The catalysed reaction is S-ubiquitinyl-[E2 ubiquitin-conjugating enzyme]-L-cysteine + [acceptor protein]-L-lysine = [E2 ubiquitin-conjugating enzyme]-L-cysteine + N(6)-ubiquitinyl-[acceptor protein]-L-lysine.. It functions in the pathway protein modification; protein ubiquitination. This is RING-H2 finger protein ATL20 (ATL20) from Arabidopsis thaliana (Mouse-ear cress).